Reading from the N-terminus, the 344-residue chain is Sulfate/thiosulfate import ATP-binding protein CysA (344 aa).

An ABC transporter domain is found at 3–237 (IEVRNLVKKF…PATAFVHGFI (235 aa)). Residue 35–42 (GPSGSGKT) participates in ATP binding.

The protein belongs to the ABC transporter superfamily. Sulfate/tungstate importer (TC 3.A.1.6) family. As to quaternary structure, the complex is composed of two ATP-binding proteins (CysA), two transmembrane proteins (CysT and CysW) and a solute-binding protein (CysP).

It localises to the cell inner membrane. It carries out the reaction sulfate(out) + ATP + H2O = sulfate(in) + ADP + phosphate + H(+). It catalyses the reaction thiosulfate(out) + ATP + H2O = thiosulfate(in) + ADP + phosphate + H(+). Functionally, part of the ABC transporter complex CysAWTP involved in sulfate/thiosulfate import. Responsible for energy coupling to the transport system. The sequence is that of Sulfate/thiosulfate import ATP-binding protein CysA from Bradyrhizobium diazoefficiens (strain JCM 10833 / BCRC 13528 / IAM 13628 / NBRC 14792 / USDA 110).